The following is a 186-amino-acid chain: MPKRKKQNQPQPPQHLALSERDEPGDEEDERPMGPPSLLGPPPMANGKPGDPKSVFHRGPPGSRGPMIPPLLSLPPPPRGRGHIRGGLGPRSSPYGRGWWGVNTEPPFPGPGHGGPSREIFYQEPRNPRRLKSWSLVKNTYPPKDSPPMMEDKSDRPVCRHFSKKGHCRYEDHCAFYHPGVNGPPL.

The segment at 1-97 (MPKRKKQNQP…LGPRSSPYGR (97 aa)) is disordered. Composition is skewed to pro residues over residues 33-44 (MGPPSLLGPPPM) and 67-79 (MIPPLLSLPPPPR). The C3H1-type zinc finger occupies 153–181 (KSDRPVCRHFSKKGHCRYEDHCAFYHPGV).

The sequence is that of Proline-rich protein 3 (Prr3) from Rattus norvegicus (Rat).